The primary structure comprises 257 residues: tRNA (guanine-N(1)-)-methyltransferase (257 aa).

Residues Gly-113 and 133–138 (IGDYVL) contribute to the S-adenosyl-L-methionine site.

Belongs to the RNA methyltransferase TrmD family. As to quaternary structure, homodimer.

The protein resides in the cytoplasm. It catalyses the reaction guanosine(37) in tRNA + S-adenosyl-L-methionine = N(1)-methylguanosine(37) in tRNA + S-adenosyl-L-homocysteine + H(+). Its function is as follows. Specifically methylates guanosine-37 in various tRNAs. The polypeptide is tRNA (guanine-N(1)-)-methyltransferase (Cronobacter sakazakii (strain ATCC BAA-894) (Enterobacter sakazakii)).